Reading from the N-terminus, the 85-residue chain is Large ribosomal subunit protein bL27 (85 aa).

The disordered stretch occupies residues 1-22 (MAHKKGQGSTQNNRDSAGRRLG).

It belongs to the bacterial ribosomal protein bL27 family.

In Sulfurimonas denitrificans (strain ATCC 33889 / DSM 1251) (Thiomicrospira denitrificans (strain ATCC 33889 / DSM 1251)), this protein is Large ribosomal subunit protein bL27.